The primary structure comprises 250 residues: 4-hydroxy-tetrahydrodipicolinate reductase (250 aa).

NAD(+) contacts are provided by residues G9–M14, G79–T81, and S103–M106. H135 (proton donor/acceptor) is an active-site residue. H136 serves as a coordination point for (S)-2,3,4,5-tetrahydrodipicolinate. K139 (proton donor) is an active-site residue. G145–T146 serves as a coordination point for (S)-2,3,4,5-tetrahydrodipicolinate.

This sequence belongs to the DapB family.

Its subcellular location is the cytoplasm. It carries out the reaction (S)-2,3,4,5-tetrahydrodipicolinate + NAD(+) + H2O = (2S,4S)-4-hydroxy-2,3,4,5-tetrahydrodipicolinate + NADH + H(+). It catalyses the reaction (S)-2,3,4,5-tetrahydrodipicolinate + NADP(+) + H2O = (2S,4S)-4-hydroxy-2,3,4,5-tetrahydrodipicolinate + NADPH + H(+). It functions in the pathway amino-acid biosynthesis; L-lysine biosynthesis via DAP pathway; (S)-tetrahydrodipicolinate from L-aspartate: step 4/4. Functionally, catalyzes the conversion of 4-hydroxy-tetrahydrodipicolinate (HTPA) to tetrahydrodipicolinate. This Rickettsia bellii (strain OSU 85-389) protein is 4-hydroxy-tetrahydrodipicolinate reductase.